We begin with the raw amino-acid sequence, 211 residues long: Protein YCF54, chloroplastic (211 aa).

A chloroplast-targeting transit peptide spans 1-80 (MWSVTGALTV…GESTKYHFLV (80 aa)).

This sequence belongs to the ycf54 family. Interacts with LFNR1 and CRD1/CHL27 in chloroplasts.

The protein localises to the plastid. It is found in the chloroplast. Involved in the biosynthesis of chlorophyll; acts probably as a scaffolding factor in the MgProto monomethylester (MgProtoME) cyclase complex to stabilize CRD1/CHL27, the catalytic subunit which catalyzes the formation of a fifth isocyclic ring to tetrapyrroles to form protochlorophyllide. The chain is Protein YCF54, chloroplastic from Arabidopsis thaliana (Mouse-ear cress).